Reading from the N-terminus, the 233-residue chain is Large ribosomal subunit protein uL1 (233 aa).

This sequence belongs to the universal ribosomal protein uL1 family. In terms of assembly, part of the 50S ribosomal subunit.

Its function is as follows. Binds directly to 23S rRNA. The L1 stalk is quite mobile in the ribosome, and is involved in E site tRNA release. Protein L1 is also a translational repressor protein, it controls the translation of the L11 operon by binding to its mRNA. In Shewanella sp. (strain ANA-3), this protein is Large ribosomal subunit protein uL1.